Reading from the N-terminus, the 1313-residue chain is Mitogen-activated protein kinase kinase kinase 15 (1313 aa).

The disordered stretch occupies residues 1–58 (MESGGGNAPAGALGAASESPQCPPPPGVEGAAGPAEPDGAAEGAAGGSGEGESGGGPR). Over residues 28-43 (VEGAAGPAEPDGAAEG) the composition is skewed to low complexity. Gly residues predominate over residues 44–57 (AAGGSGEGESGGGP). The Protein kinase domain maps to 652 to 908 (NGERVVLGKG…TAELLREGFL (257 aa)). ATP is bound by residues 658–666 (LGKGTYGIV) and Lys-681. Asp-773 functions as the Proton acceptor in the catalytic mechanism. The interval 939-958 (EPMATSSSEHGSVSPDSDAQ) is disordered. Polar residues predominate over residues 942-955 (ATSSSEHGSVSPDS). Ser-994 carries the phosphoserine modification. Residues 1179 to 1225 (QLGELRQETNRLLEHLVEKEREYQNLLRQTLEQKTQELYHLQLKLKS) adopt a coiled-coil conformation.

The protein belongs to the protein kinase superfamily. STE Ser/Thr protein kinase family. MAP kinase kinase kinase subfamily. The cofactor is Mg(2+). Isoform 2 and isoform 3 are widely expressed. Isoform 2 highest levels are observed in fetal brain, and isoform 3 highest levels in pancreas, peripheral blood leukocytes, fetal brain and spleen.

The catalysed reaction is L-seryl-[protein] + ATP = O-phospho-L-seryl-[protein] + ADP + H(+). It catalyses the reaction L-threonyl-[protein] + ATP = O-phospho-L-threonyl-[protein] + ADP + H(+). With respect to regulation, contains an N-terminal autoinhibitory domain. Activated by phosphorylation at Thr-812, inhibited by phosphorylation at Ser-924 and Ser-994. Functionally, serine/threonine kinase which acts as a component of the MAP kinase signal transduction pathway. Once activated, acts as an upstream activator of the p38 MAPK signal transduction cascade through the phosphorylation and activation of several MAP kinase kinases. May function in a signal transduction pathway that is activated by various cell stresses and leads to apoptosis. Involved in phosphorylation of WNK4 in response to osmotic stress or hypotonic low-chloride stimulation via the p38 MAPK signal transduction cascade. The polypeptide is Mitogen-activated protein kinase kinase kinase 15 (MAP3K15) (Homo sapiens (Human)).